The sequence spans 380 residues: Cytochrome b (380 aa).

4 consecutive transmembrane segments (helical) span residues 34–54, 78–99, 114–134, and 179–199; these read FGSLLGICLVTQILTGLLLAT, WLIRNLHANGASLFFICIYLHI, WNTGVILLLSLMATAFVGYVL, and FFALHFLLPFLIAGLTLTHLT. The heme b site is built by histidine 84 and histidine 98. Positions 183 and 197 each coordinate heme b. Histidine 202 serves as a coordination point for a ubiquinone. The next 4 helical transmembrane spans lie at 227 to 247, 289 to 309, 321 to 341, and 348 to 368; these read PKDLLGFILMFLPLTALALFS, LGGVLALAASVLILFLAPFLH, LSQLLFWILVTNLLILTWVGS, and FIIIGQLASLAYFIILLILFP.

This sequence belongs to the cytochrome b family. In terms of assembly, the cytochrome bc1 complex contains 11 subunits: 3 respiratory subunits (MT-CYB, CYC1 and UQCRFS1), 2 core proteins (UQCRC1 and UQCRC2) and 6 low-molecular weight proteins (UQCRH/QCR6, UQCRB/QCR7, UQCRQ/QCR8, UQCR10/QCR9, UQCR11/QCR10 and a cleavage product of UQCRFS1). This cytochrome bc1 complex then forms a dimer. Heme b serves as cofactor.

The protein localises to the mitochondrion inner membrane. Component of the ubiquinol-cytochrome c reductase complex (complex III or cytochrome b-c1 complex) that is part of the mitochondrial respiratory chain. The b-c1 complex mediates electron transfer from ubiquinol to cytochrome c. Contributes to the generation of a proton gradient across the mitochondrial membrane that is then used for ATP synthesis. The chain is Cytochrome b (MT-CYB) from Todus todus (Jamaican tody).